A 472-amino-acid polypeptide reads, in one-letter code: Uronate isomerase (472 aa).

This sequence belongs to the metallo-dependent hydrolases superfamily. Uronate isomerase family.

The catalysed reaction is D-glucuronate = D-fructuronate. It carries out the reaction aldehydo-D-galacturonate = keto-D-tagaturonate. The protein operates within carbohydrate metabolism; pentose and glucuronate interconversion. This chain is Uronate isomerase, found in Shouchella clausii (strain KSM-K16) (Alkalihalobacillus clausii).